Reading from the N-terminus, the 234-residue chain is Carbohydrate deacetylase (234 aa).

Mg(2+) contacts are provided by His60 and His123.

Belongs to the YdjC deacetylase family. Requires Mg(2+) as cofactor.

In terms of biological role, probably catalyzes the deacetylation of acetylated carbohydrates an important step in the degradation of oligosaccharides. This Bacillus anthracis protein is Carbohydrate deacetylase.